The chain runs to 624 residues: MGNDKTNMIIAIALSLAVLLGWNYFVTAPQVERQRQQQAAQVNPSQGVNPSQGVDPSQGVNASPSPKEGGPSAPVPGTLPGAAGGSPQAALARDEALARAPRVRIDTEALRGSVALKGGRIDDVALKGYHETVDPKSPEIVLLSPAGSANPYYAEFGWVGQNAGPLPGSDTVWTADGDVLTAKKPLVLTFDNGAGLVFRRTLSVDDKYMFTIEDSVENKGPNPVTLYPYGLVSRWGKPHTQGYYVLHEGMIGVVGDKGLQEYTYDKMAKENPLGAPGTRGVSWPGATGGFLGITDKYWAAATIPDQQAPYTGSFTERDEGATKVYQASSLGEARAVAPGASVQASQRLFAGAKEVSTVDAYREKLNIKQFDLLIDWGWFYFITKPMFKALDLFYKLFGNFGVSILVVTLILKLFFLPIANRSYVSMAKMKAVQPEMTAIRERYADDKVKQQQAMMELYKKEKINPVAGCWPVLIQIPVFFSLYKVLFVTIEMRHAPFFGWIRDLAAPDPTSIVNLFGLLPFTPPDLLHLGVWPIVMGITMFLQMKMNPAPPDPVQAQVFTFMPIIFTFMLGSFPAGLVIYWAWNNLLSILQQYWIMRRNGVKVELWDNLRSTFQRRTQVKTAKG.

A helical transmembrane segment spans residues Met-8 to Ala-28. The tract at residues Gln-36–Glu-95 is disordered. A compositionally biased stretch (polar residues) spans Asn-43 to Pro-64. Helical transmembrane passes span Phe-370–Leu-390, Leu-396–Leu-416, Trp-470–Ile-490, Leu-526–Leu-542, and Phe-559–Ile-579.

The protein belongs to the OXA1/ALB3/YidC family. Type 1 subfamily. In terms of assembly, interacts with the Sec translocase complex via SecD. Specifically interacts with transmembrane segments of nascent integral membrane proteins during membrane integration.

The protein resides in the cell inner membrane. Functionally, required for the insertion and/or proper folding and/or complex formation of integral membrane proteins into the membrane. Involved in integration of membrane proteins that insert both dependently and independently of the Sec translocase complex, as well as at least some lipoproteins. Aids folding of multispanning membrane proteins. The polypeptide is Membrane protein insertase YidC (Methylobacterium sp. (strain 4-46)).